Here is a 248-residue protein sequence, read N- to C-terminus: Deoxyribose-phosphate aldolase (248 aa).

Asp106 serves as the catalytic Proton donor/acceptor. Lys168 serves as the catalytic Schiff-base intermediate with acetaldehyde. The Proton donor/acceptor role is filled by Lys197.

It belongs to the DeoC/FbaB aldolase family. DeoC type 1 subfamily.

It localises to the cytoplasm. It catalyses the reaction 2-deoxy-D-ribose 5-phosphate = D-glyceraldehyde 3-phosphate + acetaldehyde. Its pathway is carbohydrate degradation; 2-deoxy-D-ribose 1-phosphate degradation; D-glyceraldehyde 3-phosphate and acetaldehyde from 2-deoxy-alpha-D-ribose 1-phosphate: step 2/2. Its function is as follows. Catalyzes a reversible aldol reaction between acetaldehyde and D-glyceraldehyde 3-phosphate to generate 2-deoxy-D-ribose 5-phosphate. This Rhizobium meliloti (strain 1021) (Ensifer meliloti) protein is Deoxyribose-phosphate aldolase.